Reading from the N-terminus, the 35-residue chain is Bacteriocin SRCAM 1580 (35 aa).

This sequence belongs to the bacteriocin class IIA/YGNGV family.

It localises to the secreted. In terms of biological role, bacteriocin with antibacterial activity against C.jejuni. The sequence is that of Bacteriocin SRCAM 1580 from Niallia circulans (Bacillus circulans).